Reading from the N-terminus, the 361-residue chain is Nuclear pore complex protein NUP43 (361 aa).

Residues 51-73 are disordered; that stretch reads IQSLDPNPRGNHNTNPLIESLSS. WD repeat units lie at residues 132–173, 177–215, and 225–265; these read FHVG…YRKV, NGLV…EAVS, and KTSA…QPIV.

Part of the nuclear pore complex (NPC). The NPC has an eight-fold symmetrical structure comprising a central transport channel and two rings, the cytoplasmic and nuclear rings, to which eight filaments are attached. The cytoplasmic filaments have loose ends, while the nuclear filaments are joined in a distal ring, forming a nuclear basket. NPCs are highly dynamic in configuration and composition, and can be devided in 3 subcomplexes, the NUP62 subcomplex, the NUP107-160 subcomplex and the NUP93 subcomplex, containing approximately 30 different nucleoporin proteins.

The protein resides in the nucleus envelope. It localises to the nucleus. The protein localises to the nuclear pore complex. The protein is Nuclear pore complex protein NUP43 of Arabidopsis thaliana (Mouse-ear cress).